A 903-amino-acid polypeptide reads, in one-letter code: Protein translocase subunit SecA (903 aa).

Residues glutamine 87, 105-109, and aspartate 512 each bind ATP; that span reads GEGKT. The tract at residues 853 to 903 is disordered; that stretch reads KQQQLSHYEENALVTEDPNAPATAERKVGRNDPCPCGSGKKYKQCHGRLQS. Residues cysteine 886, cysteine 888, cysteine 897, and histidine 898 each contribute to the Zn(2+) site. Over residues 892–903 the composition is skewed to basic residues; sequence KKYKQCHGRLQS.

The protein belongs to the SecA family. Monomer and homodimer. Part of the essential Sec protein translocation apparatus which comprises SecA, SecYEG and auxiliary proteins SecDF-YajC and YidC. The cofactor is Zn(2+).

It is found in the cell inner membrane. It localises to the cytoplasm. It catalyses the reaction ATP + H2O + cellular proteinSide 1 = ADP + phosphate + cellular proteinSide 2.. Functionally, part of the Sec protein translocase complex. Interacts with the SecYEG preprotein conducting channel. Has a central role in coupling the hydrolysis of ATP to the transfer of proteins into and across the cell membrane, serving both as a receptor for the preprotein-SecB complex and as an ATP-driven molecular motor driving the stepwise translocation of polypeptide chains across the membrane. The chain is Protein translocase subunit SecA from Serratia proteamaculans (strain 568).